The chain runs to 295 residues: Beta-lactamase-like protein 2 homolog (295 aa).

Positions 79, 81, 83, 84, 141, 160, and 195 each coordinate Zn(2+).

The protein belongs to the metallo-beta-lactamase superfamily. Glyoxalase II family.

The chain is Beta-lactamase-like protein 2 homolog from Caenorhabditis elegans.